The following is a 124-amino-acid chain: MAAAMTFCRLLNRCGEAARSLPLGARCFGVRVSPTGEKVTHTGQVYDDKDYRRIRFVGRQKEVNENFAIDLIAEQPVSEVETRVIACDGGGGALGHPKVYINLDKETKTGTCGYCGLQFRQHHR.

The N-terminal 28 residues, 1 to 28, are a transit peptide targeting the mitochondrion; the sequence is MAAAMTFCRLLNRCGEAARSLPLGARCF. Lys98 carries the post-translational modification N6-acetyllysine.

Belongs to the complex I NDUFS6 subunit family. In terms of assembly, mammalian complex I is composed of 45 different subunits. This is a component of the iron-sulfur (IP) fragment of the enzyme.

Its subcellular location is the mitochondrion inner membrane. Accessory subunit of the mitochondrial membrane respiratory chain NADH dehydrogenase (Complex I), that is believed not to be involved in catalysis. Complex I functions in the transfer of electrons from NADH to the respiratory chain. The immediate electron acceptor for the enzyme is believed to be ubiquinone. This is NADH dehydrogenase [ubiquinone] iron-sulfur protein 6, mitochondrial (NDUFS6) from Gorilla gorilla gorilla (Western lowland gorilla).